The primary structure comprises 461 residues: Kynurenine 3-monooxygenase (461 aa).

FAD-binding positions include 17–18, 37–39, and alanine 56; these read LA and ERR. Positions 84 and 98 each coordinate L-kynurenine. FAD contacts are provided by residues arginine 111, leucine 135, aspartate 311, and 324–325; that span reads MN. The L-kynurenine site is built by asparagine 369 and tyrosine 404.

This sequence belongs to the aromatic-ring hydroxylase family. KMO subfamily. FAD serves as cofactor.

The enzyme catalyses L-kynurenine + NADPH + O2 + H(+) = 3-hydroxy-L-kynurenine + NADP(+) + H2O. The protein operates within cofactor biosynthesis; NAD(+) biosynthesis; quinolinate from L-kynurenine: step 1/3. It participates in siderophore biosynthesis; quinolobactin biosynthesis. Its function is as follows. Catalyzes the hydroxylation of L-kynurenine (L-Kyn) to form 3-hydroxy-L-kynurenine (L-3OHKyn). Probably required for the synthesis of quinolinic acid and the siderophore quinolobactin. This chain is Kynurenine 3-monooxygenase, found in Pseudomonas fluorescens.